Consider the following 185-residue polypeptide: MVLSSQLSVGMFISTKDGLYKVVAVSKVTGNKGESFIKASLKAADSDVIVERNFKIGQEIKEAQFESRNLEYLYIEDENFLFLDLGNYEKIYISKEIMKDNFLFLKAGVTVSAMVYDDVVFSIELPHFLELMVSKTDFPGDSLLITGGTKKALLETGVEITVPPFVEIGDIIKIDTRTCEYIQRV.

The protein belongs to the elongation factor P family.

It is found in the cytoplasm. The protein operates within protein biosynthesis; polypeptide chain elongation. In terms of biological role, involved in peptide bond synthesis. Stimulates efficient translation and peptide-bond synthesis on native or reconstituted 70S ribosomes in vitro. Probably functions indirectly by altering the affinity of the ribosome for aminoacyl-tRNA, thus increasing their reactivity as acceptors for peptidyl transferase. This is Elongation factor P 1 (efp1) from Chlamydia caviae (strain ATCC VR-813 / DSM 19441 / 03DC25 / GPIC) (Chlamydophila caviae).